We begin with the raw amino-acid sequence, 228 residues long: MQRPHRRQSQMDAASTRAPPRPSAPQQGRRQPSMPGSAQCHHRPDPHPPAPGKKKSSPVGRFFPASAMAPPWLPGIVSAAQLKPVLSDLPPHCTRAQCQPLTQRPHSLHLQDSRNASSLPHKGWRCNFPLQGPAGLTHKSACVGRMGHCCGSAGNVPELSPRPASPRGQQVTQDGPLQTPELPSECNVGPVMSRQPFPEQSQQGECAIDPRGPPRLELSWGEDPLSGV.

2 disordered regions span residues 1–62 (MQRP…VGRF) and 160–228 (SPRP…LSGV). Residues 13–33 (AASTRAPPRPSAPQQGRRQPS) show a composition bias toward low complexity. Positions 167–176 (RGQQVTQDGP) are enriched in polar residues.

This is an uncharacterized protein from Homo sapiens (Human).